Reading from the N-terminus, the 248-residue chain is 2,3-bisphosphoglycerate-dependent phosphoglycerate mutase (248 aa).

Substrate contacts are provided by residues 8 to 15 (RHGESLWN), 21 to 22 (TG), Arg60, 87 to 90 (EKHY), Lys98, 114 to 115 (RR), and 183 to 184 (GN). His9 (tele-phosphohistidine intermediate) is an active-site residue. Residue Glu87 is the Proton donor/acceptor of the active site.

It belongs to the phosphoglycerate mutase family. BPG-dependent PGAM subfamily.

The catalysed reaction is (2R)-2-phosphoglycerate = (2R)-3-phosphoglycerate. It participates in carbohydrate degradation; glycolysis; pyruvate from D-glyceraldehyde 3-phosphate: step 3/5. Catalyzes the interconversion of 2-phosphoglycerate and 3-phosphoglycerate. The polypeptide is 2,3-bisphosphoglycerate-dependent phosphoglycerate mutase (Porphyromonas gingivalis (strain ATCC 33277 / DSM 20709 / CIP 103683 / JCM 12257 / NCTC 11834 / 2561)).